The following is a 248-amino-acid chain: Proteasome subunit alpha type-5 (248 aa).

This sequence belongs to the peptidase T1A family. The 26S proteasome consists of a 20S proteasome core and two 19S regulatory subunits. The 20S proteasome core is composed of 28 subunits that are arranged in four stacked rings, resulting in a barrel-shaped structure. The two end rings are each formed by seven alpha subunits, and the two central rings are each formed by seven beta subunits. The catalytic chamber with the active sites is on the inside of the barrel.

It localises to the cytoplasm. The protein localises to the nucleus. In terms of biological role, the proteasome is a multicatalytic proteinase complex which is characterized by its ability to cleave peptides with Arg, Phe, Tyr, Leu, and Glu adjacent to the leaving group at neutral or slightly basic pH. The proteasome has an ATP-dependent proteolytic activity. In Caenorhabditis elegans, this protein is Proteasome subunit alpha type-5 (pas-5).